We begin with the raw amino-acid sequence, 307 residues long: D-alanine--D-alanine ligase (307 aa).

The region spanning 108-301 is the ATP-grasp domain; sequence KEVFAAAGLP…FPEFCAWLVE (194 aa). 135–185 provides a ligand contact to ATP; that stretch reads LPPPYVVKPNAEGSSVGVYIVHEDANGPPQLAADMPQDLMVETYVPGRELT. Residues Asp-252, Glu-268, and Asn-270 each coordinate Mg(2+).

This sequence belongs to the D-alanine--D-alanine ligase family. Mg(2+) serves as cofactor. The cofactor is Mn(2+).

Its subcellular location is the cytoplasm. The enzyme catalyses 2 D-alanine + ATP = D-alanyl-D-alanine + ADP + phosphate + H(+). Its pathway is cell wall biogenesis; peptidoglycan biosynthesis. Functionally, cell wall formation. The chain is D-alanine--D-alanine ligase from Cereibacter sphaeroides (strain ATCC 17029 / ATH 2.4.9) (Rhodobacter sphaeroides).